A 246-amino-acid chain; its full sequence is Octanoyltransferase (246 aa).

One can recognise a BPL/LPL catalytic domain in the interval 38–213 (AQQSDEFWVL…FLAKRLGLTP (176 aa)). Substrate contacts are provided by residues 77 to 84 (RGGQVTYH), 144 to 146 (SLG), and 157 to 159 (GLA). Catalysis depends on cysteine 175, which acts as the Acyl-thioester intermediate. The tract at residues 225 to 246 (RQENVTTGGDPGSALTQQPERL) is disordered.

Belongs to the LipB family.

The protein resides in the cytoplasm. It carries out the reaction octanoyl-[ACP] + L-lysyl-[protein] = N(6)-octanoyl-L-lysyl-[protein] + holo-[ACP] + H(+). The protein operates within protein modification; protein lipoylation via endogenous pathway; protein N(6)-(lipoyl)lysine from octanoyl-[acyl-carrier-protein]: step 1/2. Functionally, catalyzes the transfer of endogenously produced octanoic acid from octanoyl-acyl-carrier-protein onto the lipoyl domains of lipoate-dependent enzymes. Lipoyl-ACP can also act as a substrate although octanoyl-ACP is likely to be the physiological substrate. The polypeptide is Octanoyltransferase (Alcanivorax borkumensis (strain ATCC 700651 / DSM 11573 / NCIMB 13689 / SK2)).